A 348-amino-acid polypeptide reads, in one-letter code: Inosamine-phosphate amidinotransferase 1 (348 aa).

Catalysis depends on residues D179 and H227. C332 serves as the catalytic Amidino-cysteine intermediate.

This sequence belongs to the amidinotransferase family. Homodimer.

It catalyses the reaction 1-amino-1-deoxy-scyllo-inositol 4-phosphate + L-arginine = 1-guanidino-1-deoxy-scyllo-inositol 4-phosphate + L-ornithine. It functions in the pathway antibiotic biosynthesis; streptomycin biosynthesis. In terms of biological role, catalyzes two non-consecutive transamidination reactions. It converts scyllo-inosamine 4-phosphate into N-amidino-scyllo-inosamine 4-phosphate and N1-amidinostreptamine 6-phosphate into streptidine 6-phosphate. The protein is Inosamine-phosphate amidinotransferase 1 (strB1) of Streptomyces glaucescens.